The following is a 551-amino-acid chain: Serendipity locus protein alpha (551 aa).

The protein localises to the cytoplasm. It localises to the cell membrane. Required for the cellularization of the syncytial blastoderm embryo. Involved in the localization of the actin filaments just prior to and during plasma membrane invagination. Sry-alpha together with nullo and bnk may provide auxiliary functions, by acting both to stabilize a large and dynamic microfilament structure and regulate its functions. The sequence is that of Serendipity locus protein alpha (Sry-alpha) from Drosophila pseudoobscura pseudoobscura (Fruit fly).